The following is a 259-amino-acid chain: MADS-box protein ZMM17 (259 aa).

The 61-residue stretch at 1 to 61 folds into the MADS-box domain; that stretch reads MGRGKIEIKR…GKMFEYCSPA (61 aa). Residues 85–175 enclose the K-box domain; it reads DQQILLEMTR…YRMINENQQA (91 aa). The segment at 237–259 is disordered; it reads PTQPNLQDPAAPCGGLHGHGLQL.

As to expression, strong expression in female inflorescences (ears), but also weak expression in male inflorescences (tassels). At early stages of the development of the female spiklet, expressed in all organ primordia but later restricted to the ovule and the developing silk. At very late stages of development, expression becomes restricted to parts of the silk.

It is found in the nucleus. Functionally, probable transcription factor. This Zea mays (Maize) protein is MADS-box protein ZMM17 (M17).